The chain runs to 180 residues: Putative manganese efflux pump MntP (180 aa).

6 consecutive transmembrane segments (helical) span residues 1 to 21 (MLSVILLAIALAMDAFSISIT), 34 to 54 (ILWYGIFFGGFQCFMPIIGYV), 63 to 83 (ISTYAPWIAFILLLCIGLNMI), 103 to 123 (VTLLAIATSIDAFAVGVTFAI), 129 to 149 (VIPCAIIGIITFLFSIVGIFI), and 160 to 180 (KFQILGGVILILLGFKILLGF).

Belongs to the MntP (TC 9.B.29) family.

Its subcellular location is the cell membrane. Functionally, probably functions as a manganese efflux pump. The protein is Putative manganese efflux pump MntP of Methanosphaera stadtmanae (strain ATCC 43021 / DSM 3091 / JCM 11832 / MCB-3).